We begin with the raw amino-acid sequence, 156 residues long: Small ribosomal subunit protein uS7 (156 aa).

This sequence belongs to the universal ribosomal protein uS7 family. In terms of assembly, part of the 30S ribosomal subunit. Contacts proteins S9 and S11.

In terms of biological role, one of the primary rRNA binding proteins, it binds directly to 16S rRNA where it nucleates assembly of the head domain of the 30S subunit. Is located at the subunit interface close to the decoding center, probably blocks exit of the E-site tRNA. The protein is Small ribosomal subunit protein uS7 of Pseudomonas syringae pv. syringae (strain B728a).